The following is a 97-amino-acid chain: Ribosomal biogenesis factor (97 aa).

S19 is subject to Phosphoserine. K21 is modified (N6-acetyllysine). Phosphoserine is present on S69.

Associates with the pre-60S ribosomal particles.

The protein localises to the nucleus. It is found in the nucleolus. Its function is as follows. Trans-acting factor in ribosome biogenesis required for efficient 40S and 60S subunit production. The chain is Ribosomal biogenesis factor (Rbis) from Mus musculus (Mouse).